Here is a 382-residue protein sequence, read N- to C-terminus: Dual-specificity RNA methyltransferase RlmN (382 aa).

Glu91 serves as the catalytic Proton acceptor. Positions 97-339 (ETDRGTLCIS…TTVRKTRGDD (243 aa)) constitute a Radical SAM core domain. The cysteines at positions 104 and 344 are disulfide-linked. Positions 111, 115, and 118 each coordinate [4Fe-4S] cluster. S-adenosyl-L-methionine contacts are provided by residues 165 to 166 (GE), Ser197, 219 to 221 (SLH), and Asn301. Cys344 acts as the S-methylcysteine intermediate in catalysis.

The protein belongs to the radical SAM superfamily. RlmN family. The cofactor is [4Fe-4S] cluster.

The protein resides in the cytoplasm. It carries out the reaction adenosine(2503) in 23S rRNA + 2 reduced [2Fe-2S]-[ferredoxin] + 2 S-adenosyl-L-methionine = 2-methyladenosine(2503) in 23S rRNA + 5'-deoxyadenosine + L-methionine + 2 oxidized [2Fe-2S]-[ferredoxin] + S-adenosyl-L-homocysteine. It catalyses the reaction adenosine(37) in tRNA + 2 reduced [2Fe-2S]-[ferredoxin] + 2 S-adenosyl-L-methionine = 2-methyladenosine(37) in tRNA + 5'-deoxyadenosine + L-methionine + 2 oxidized [2Fe-2S]-[ferredoxin] + S-adenosyl-L-homocysteine. Its function is as follows. Specifically methylates position 2 of adenine 2503 in 23S rRNA and position 2 of adenine 37 in tRNAs. m2A2503 modification seems to play a crucial role in the proofreading step occurring at the peptidyl transferase center and thus would serve to optimize ribosomal fidelity. This Polaromonas sp. (strain JS666 / ATCC BAA-500) protein is Dual-specificity RNA methyltransferase RlmN.